Consider the following 315-residue polypeptide: tRNA dimethylallyltransferase (315 aa).

18-25 (GPTASGKT) provides a ligand contact to ATP. Residue 20-25 (TASGKT) participates in substrate binding. Interaction with substrate tRNA stretches follow at residues 43–46 (DSAL), 167–171 (QRLSR), and 248–253 (RCVGYR).

The protein belongs to the IPP transferase family. As to quaternary structure, monomer. The cofactor is Mg(2+).

It carries out the reaction adenosine(37) in tRNA + dimethylallyl diphosphate = N(6)-dimethylallyladenosine(37) in tRNA + diphosphate. Catalyzes the transfer of a dimethylallyl group onto the adenine at position 37 in tRNAs that read codons beginning with uridine, leading to the formation of N6-(dimethylallyl)adenosine (i(6)A). The protein is tRNA dimethylallyltransferase of Pseudoalteromonas atlantica (strain T6c / ATCC BAA-1087).